Here is a 209-residue protein sequence, read N- to C-terminus: Ribonuclease HII (209 aa).

An RNase H type-2 domain is found at 19–208; that stretch reads GLVAGVDEAG…VARALQAPVA (190 aa). Asp-25, Glu-26, and Asp-117 together coordinate a divalent metal cation.

It belongs to the RNase HII family. The cofactor is Mn(2+). Requires Mg(2+) as cofactor.

The protein localises to the cytoplasm. It catalyses the reaction Endonucleolytic cleavage to 5'-phosphomonoester.. Its function is as follows. Endonuclease that specifically degrades the RNA of RNA-DNA hybrids. In Acidovorax ebreus (strain TPSY) (Diaphorobacter sp. (strain TPSY)), this protein is Ribonuclease HII.